The chain runs to 113 residues: uncharacterized protein (113 aa).

The signal sequence occupies residues 1-22 (MCRFPTFLLIAIAITMLPTILS). An N-linked (GlcNAc...) asparagine glycan is attached at Asn-47.

It is found in the secreted. This is an uncharacterized protein from Caenorhabditis elegans.